A 100-amino-acid chain; its full sequence is Double-stranded DNA-binding protein (100 aa).

Residues methionine 1–methionine 19 mediate DNA binding.

Homodimer. Homomultimer. Binds to double-stranded DNA giving rise to multimeric nucleoprotein complexes.

Functionally, histone-like nucleoprotein that binds to the viral dsDNA and responsible for wrapping and condensing the viral DNA about 4-fold. Forms a nucleoprotein complex in which the DNA adopts a right-handed toroidal conformation winding around a protein core. Binding specificity for the viral genome is based on supercoiling. The formation of the nucleoprotein complex at the genome ends, for which the binding affinity is highest, activates the initiation of viral DNA replication. The binding of p6 would recruit the complex formed by the TP and the DNA polymerase to the origin. Protein p6 is also involved in the early to late transcription switch. The chain is Double-stranded DNA-binding protein from Bacillus phage Nf (Bacteriophage Nf).